The sequence spans 88 residues: MALLDFFLSRKKNTASIAKERLQIIVAERRRSDAEPHYLPQLKRDILEVICKYVQIDPEMVTVQLEQKGDDISILELNVTLPEAEETK.

Belongs to the MinE family.

In terms of biological role, prevents the cell division inhibition by proteins MinC and MinD at internal division sites while permitting inhibition at polar sites. This ensures cell division at the proper site by restricting the formation of a division septum at the midpoint of the long axis of the cell. The polypeptide is Cell division topological specificity factor (Cronobacter sakazakii (strain ATCC BAA-894) (Enterobacter sakazakii)).